We begin with the raw amino-acid sequence, 571 residues long: Glutamate--tRNA ligase (571 aa).

The 'HIGH' region signature appears at 110-120 (PNPNGPATLGS).

This sequence belongs to the class-I aminoacyl-tRNA synthetase family. Glutamate--tRNA ligase type 2 subfamily.

The protein resides in the cytoplasm. It carries out the reaction tRNA(Glu) + L-glutamate + ATP = L-glutamyl-tRNA(Glu) + AMP + diphosphate. In terms of biological role, catalyzes the attachment of glutamate to tRNA(Glu) in a two-step reaction: glutamate is first activated by ATP to form Glu-AMP and then transferred to the acceptor end of tRNA(Glu). The chain is Glutamate--tRNA ligase from Methanosarcina barkeri (strain Fusaro / DSM 804).